The primary structure comprises 146 residues: Hemoglobin subunit beta (146 aa).

The region spanning 2-146 is the Globin domain; it reads HWTADEKQLI…VAHALALGYH (145 aa). The heme b site is built by histidine 63 and histidine 92.

Belongs to the globin family. Heterotetramer of two alpha chains and two beta chains. As to expression, red blood cells.

Functionally, involved in oxygen transport from the lung to the various peripheral tissues. This Chrysemys picta bellii (Western painted turtle) protein is Hemoglobin subunit beta (HBB).